Reading from the N-terminus, the 216-residue chain is CDP-diacylglycerol--glycerol-3-phosphate 3-phosphatidyltransferase (216 aa).

4 helical membrane passes run 40–60 (VVSI…FLDG), 88–108 (VMLC…CILY), 141–161 (MGAV…LAGA), and 176–196 (VVPV…FFPI).

It belongs to the CDP-alcohol phosphatidyltransferase class-I family.

The protein localises to the cell membrane. It carries out the reaction a CDP-1,2-diacyl-sn-glycerol + sn-glycerol 3-phosphate = a 1,2-diacyl-sn-glycero-3-phospho-(1'-sn-glycero-3'-phosphate) + CMP + H(+). Its pathway is phospholipid metabolism; phosphatidylglycerol biosynthesis; phosphatidylglycerol from CDP-diacylglycerol: step 1/2. Its function is as follows. This protein catalyzes the committed step to the synthesis of the acidic phospholipids. In Treponema pallidum (strain Nichols), this protein is CDP-diacylglycerol--glycerol-3-phosphate 3-phosphatidyltransferase (pgsA).